The following is a 167-amino-acid chain: Transcriptional regulator MraZ (167 aa).

SpoVT-AbrB domains are found at residues Glu8–His51 and Ser92–Thr135.

It belongs to the MraZ family. As to quaternary structure, forms oligomers.

The protein localises to the cytoplasm. Its subcellular location is the nucleoid. The protein is Transcriptional regulator MraZ of Ruegeria sp. (strain TM1040) (Silicibacter sp.).